The primary structure comprises 373 residues: Alpha-1,3-mannosyl-glycoprotein 4-beta-N-acetylglucosaminyltransferase-like protein MGAT4D (373 aa).

Residues 1–5 lie on the Cytoplasmic side of the membrane; the sequence is MKAKN. The helical; Signal-anchor for type II membrane protein transmembrane segment at 6–26 threads the bilayer; the sequence is VNLLFAFVAVLLFGFSCFCIS. Topologically, residues 27 to 373 are lumenal; it reads RMNQTNNQLI…REQHLKDNYY (347 aa). 3 N-linked (GlcNAc...) asparagine glycosylation sites follow: asparagine 29, asparagine 54, and asparagine 144.

This sequence belongs to the glycosyltransferase 54 family. As to quaternary structure, isoform 2 self-associates; specifically in the endoplasmic reticulum prior to its translocation to the Golgi. Isoform 1 and isoform 2 interact with MGAT1, MGAT3 and MAN2A2; isoform 2 interacts specifically with MGAT1 in the Golgi. Post-translationally, isoform 2 is N-glycosylated; consisting of high-mannose and/or hybrid glycans. As to expression, isoform 1 and isoform 2 are specifically expressed in testis. Isoform 2 is expressed in spermatocytes but not in spermatids. Isoform 1 is expressed in spermatids.

The protein localises to the endoplasmic reticulum membrane. It is found in the endoplasmic reticulum-Golgi intermediate compartment membrane. The protein resides in the golgi apparatus membrane. Functionally, may play a role in male spermatogenesis. In vitro acts as inhibitor of MGAT1 activity causing cell surface proteins to carry mainly high mannose N-glycans. The function is mediated by its lumenal domain and occurs specifically in the Golgi. A catalytic glucosyltransferase activity is not detected. May be involved in regulation of Sertoli-germ cell interactions during specific stages of spermatogenesis. The sequence is that of Alpha-1,3-mannosyl-glycoprotein 4-beta-N-acetylglucosaminyltransferase-like protein MGAT4D from Mus musculus (Mouse).